A 703-amino-acid chain; its full sequence is Ubiquitin-like modifier-activating enzyme ATG7 (703 aa).

The residue at position 2 (alanine 2) is an N-acetylalanine. An FAP motif motif is present at residues 15-17 (FAP). A Glycyl lysine isopeptide (Lys-Gly) (interchain with G-Cter in ubiquitin) cross-link involves residue lysine 45. The Glycyl thioester intermediate role is filled by cysteine 572. Serine 698 bears the Phosphoserine mark.

The protein belongs to the ATG7 family. Homodimer. Interacts with ATG3; this interaction is essential for the transfer of ATG8-like proteins's thioester from ATG7 to ATG3 and plays a role in the conjugation of ATG12 to ATG5. Interacts with ATG12. Forms intermediate conjugates with GABARAPL1. Forms intermediate conjugates with ATG8-like proteins such as GABARAP, GABARAPL2 or MAP1LC3A. Interacts with EP300 acetyltransferase. Interacts with FOXO1. Post-translationally, acetylated by EP300. In terms of processing, polyubiquitinated on Lys-45 via 'Lys-63'-linked ubiquitin by TRIM32; this modification positiely regulates ATG8 and ATG12 activating enzyme activity leading to initiation of autophagy under metabolic stress. In terms of tissue distribution, widely expressed, especially in kidney, liver, lymph nodes and bone marrow.

It localises to the cytoplasm. Its subcellular location is the preautophagosomal structure. E1-like activating enzyme involved in the 2 ubiquitin-like systems required for cytoplasm to vacuole transport (Cvt) and autophagy. Activates ATG12 for its conjugation with ATG5 as well as the ATG8 family proteins for their conjugation with phosphatidylethanolamine. Both systems are needed for the ATG8 association to Cvt vesicles and autophagosomes membranes. Required for autophagic death induced by caspase-8 inhibition. Facilitates LC3-I lipidation with phosphatidylethanolamine to form LC3-II which is found on autophagosomal membranes. Required for mitophagy which contributes to regulate mitochondrial quantity and quality by eliminating the mitochondria to a basal level to fulfill cellular energy requirements and preventing excess ROS production. Modulates p53/TP53 activity to regulate cell cycle and survival during metabolic stress. Also plays a key role in the maintenance of axonal homeostasis, the prevention of axonal degeneration, the maintenance of hematopoietic stem cells, the formation of Paneth cell granules, as well as in adipose differentiation. Plays a role in regulating the liver clock and glucose metabolism by mediating the autophagic degradation of CRY1 (clock repressor) in a time-dependent manner. This Homo sapiens (Human) protein is Ubiquitin-like modifier-activating enzyme ATG7.